The primary structure comprises 250 residues: 3-deoxy-manno-octulosonate cytidylyltransferase (250 aa).

Belongs to the KdsB family.

It localises to the cytoplasm. The catalysed reaction is 3-deoxy-alpha-D-manno-oct-2-ulosonate + CTP = CMP-3-deoxy-beta-D-manno-octulosonate + diphosphate. It functions in the pathway nucleotide-sugar biosynthesis; CMP-3-deoxy-D-manno-octulosonate biosynthesis; CMP-3-deoxy-D-manno-octulosonate from 3-deoxy-D-manno-octulosonate and CTP: step 1/1. Its pathway is bacterial outer membrane biogenesis; lipopolysaccharide biosynthesis. In terms of biological role, activates KDO (a required 8-carbon sugar) for incorporation into bacterial lipopolysaccharide in Gram-negative bacteria. This chain is 3-deoxy-manno-octulosonate cytidylyltransferase, found in Pectobacterium carotovorum subsp. carotovorum (strain PC1).